Here is a 204-residue protein sequence, read N- to C-terminus: Holliday junction branch migration complex subunit RuvA (204 aa).

The segment at 1–64 (MIGRLRGIIL…EDAQLLYGFN (64 aa)) is domain I. Residues 65–142 (NKQERALFRE…KGLNGDLFNN (78 aa)) are domain II. Residues 143-155 (TGDISLPTASPQT) form a flexible linker region. Residues 156–204 (SDADIEAEAASALVALGYKPQEASRLVSKIAKPGADCETLIRDALRAAL) form a domain III region.

It belongs to the RuvA family. In terms of assembly, homotetramer. Forms an RuvA(8)-RuvB(12)-Holliday junction (HJ) complex. HJ DNA is sandwiched between 2 RuvA tetramers; dsDNA enters through RuvA and exits via RuvB. An RuvB hexamer assembles on each DNA strand where it exits the tetramer. Each RuvB hexamer is contacted by two RuvA subunits (via domain III) on 2 adjacent RuvB subunits; this complex drives branch migration. In the full resolvosome a probable DNA-RuvA(4)-RuvB(12)-RuvC(2) complex forms which resolves the HJ.

It localises to the cytoplasm. The RuvA-RuvB-RuvC complex processes Holliday junction (HJ) DNA during genetic recombination and DNA repair, while the RuvA-RuvB complex plays an important role in the rescue of blocked DNA replication forks via replication fork reversal (RFR). RuvA specifically binds to HJ cruciform DNA, conferring on it an open structure. The RuvB hexamer acts as an ATP-dependent pump, pulling dsDNA into and through the RuvAB complex. HJ branch migration allows RuvC to scan DNA until it finds its consensus sequence, where it cleaves and resolves the cruciform DNA. The sequence is that of Holliday junction branch migration complex subunit RuvA from Yersinia pseudotuberculosis serotype O:1b (strain IP 31758).